The chain runs to 381 residues: UDP-N-acetylglucosamine--N-acetylmuramyl-(pentapeptide) pyrophosphoryl-undecaprenol N-acetylglucosamine transferase (381 aa).

UDP-N-acetyl-alpha-D-glucosamine is bound by residues 10-12 (TGG), Asn124, Arg165, Ser190, Ile245, and Gln290. The disordered stretch occupies residues 361 to 381 (WGSPAGQERPGHGPVRPPDLA).

This sequence belongs to the glycosyltransferase 28 family. MurG subfamily.

The protein localises to the cell inner membrane. It carries out the reaction di-trans,octa-cis-undecaprenyl diphospho-N-acetyl-alpha-D-muramoyl-L-alanyl-D-glutamyl-meso-2,6-diaminopimeloyl-D-alanyl-D-alanine + UDP-N-acetyl-alpha-D-glucosamine = di-trans,octa-cis-undecaprenyl diphospho-[N-acetyl-alpha-D-glucosaminyl-(1-&gt;4)]-N-acetyl-alpha-D-muramoyl-L-alanyl-D-glutamyl-meso-2,6-diaminopimeloyl-D-alanyl-D-alanine + UDP + H(+). It participates in cell wall biogenesis; peptidoglycan biosynthesis. Cell wall formation. Catalyzes the transfer of a GlcNAc subunit on undecaprenyl-pyrophosphoryl-MurNAc-pentapeptide (lipid intermediate I) to form undecaprenyl-pyrophosphoryl-MurNAc-(pentapeptide)GlcNAc (lipid intermediate II). This is UDP-N-acetylglucosamine--N-acetylmuramyl-(pentapeptide) pyrophosphoryl-undecaprenol N-acetylglucosamine transferase from Anaeromyxobacter sp. (strain Fw109-5).